Here is a 501-residue protein sequence, read N- to C-terminus: 4,4'-diapophytoene desaturase (4,4'-diaponeurosporene-forming) (501 aa).

Position 5-17 (5-17 (VVGAGVTGLAAAA)) interacts with FAD.

This sequence belongs to the carotenoid/retinoid oxidoreductase family. CrtN subfamily.

It catalyses the reaction 15-cis-4,4'-diapophytoene + 3 FAD + 3 H(+) = all-trans-4,4'-diaponeurosporene + 3 FADH2. It participates in carotenoid biosynthesis; staphyloxanthin biosynthesis; staphyloxanthin from farnesyl diphosphate: step 2/5. In terms of biological role, involved in the biosynthesis of the yellow-orange carotenoid staphyloxanthin, which plays a role in the virulence via its protective function against oxidative stress. Catalyzes three successive dehydrogenation reactions that lead to the introduction of three double bonds into 4,4'-diapophytoene (dehydrosqualene), with 4,4'-diapophytofluene and 4,4'-diapo-zeta-carotene as intermediates, and 4,4'-diaponeurosporene (the major deep-yellow pigment in staphylococci strains) as the end product. The chain is 4,4'-diapophytoene desaturase (4,4'-diaponeurosporene-forming) from Staphylococcus haemolyticus (strain JCSC1435).